Consider the following 328-residue polypeptide: MFRIAVDCMGFENSVSEAVKAVIKYAKKHKDLSFVLVGDENQIRPLVENKKYLNYRIVHTTNEIGMSDSVLTAYRKKDSSMYLTIELLKNNEVDTIISAGSSSAYVALTYNLIGKIHHKIKVGFMSYVPTVTKRGFWFLDVGANKEYLGEELYYLGKMANTFITSVFNYQPRLGVLNIGAEKNKGFEYHQVVYNLLENDKTVDFLGFIEPRGLIKGECDLLVSDGYSGNLVLKSLEGALKSVGKILKKNYKINPLGALFSANVIYQITKTFDYKNNAGAVVLGLNKLVLKTHGSADAKQFYSTIRLAHESLLNNLIEKITKECSTFLN.

This sequence belongs to the PlsX family. Homodimer. Probably interacts with PlsY.

It is found in the cytoplasm. The enzyme catalyses a fatty acyl-[ACP] + phosphate = an acyl phosphate + holo-[ACP]. It participates in lipid metabolism; phospholipid metabolism. In terms of biological role, catalyzes the reversible formation of acyl-phosphate (acyl-PO(4)) from acyl-[acyl-carrier-protein] (acyl-ACP). This enzyme utilizes acyl-ACP as fatty acyl donor, but not acyl-CoA. The chain is Phosphate acyltransferase from Mycoplasmoides gallisepticum (strain R(low / passage 15 / clone 2)) (Mycoplasma gallisepticum).